Here is a 196-residue protein sequence, read N- to C-terminus: Ribonuclease HII (196 aa).

Positions 9 to 196 (KLVAGVDEVG…KPVRHALGIE (188 aa)) constitute an RNase H type-2 domain. A divalent metal cation contacts are provided by Asp-15, Glu-16, and Asp-107.

This sequence belongs to the RNase HII family. Mn(2+) is required as a cofactor. Requires Mg(2+) as cofactor.

Its subcellular location is the cytoplasm. The catalysed reaction is Endonucleolytic cleavage to 5'-phosphomonoester.. Its function is as follows. Endonuclease that specifically degrades the RNA of RNA-DNA hybrids. This is Ribonuclease HII from Aeromonas salmonicida (strain A449).